Reading from the N-terminus, the 1272-residue chain is Presporeless protein A (1272 aa).

A Nuclear localization signal motif is present at residues lysine 146–arginine 161. Disordered stretches follow at residues alanine 369–serine 403 and serine 468–lysine 490. The segment covering aspartate 374 to aspartate 392 has biased composition (acidic residues). Basic and acidic residues predominate over residues aspartate 393–serine 403. A compositionally biased stretch (low complexity) spans serine 468–asparagine 487.

Its subcellular location is the nucleus. Functionally, functions autonomously, very early in the prespore pathway, to control prespore cell differentiation, maybe at the level of transcription. Also required for proper aggregation. This Dictyostelium discoideum (Social amoeba) protein is Presporeless protein A (pslA).